A 257-amino-acid chain; its full sequence is UPF0246 protein Shewana3_3143 (257 aa).

This sequence belongs to the UPF0246 family.

This is UPF0246 protein Shewana3_3143 from Shewanella sp. (strain ANA-3).